The chain runs to 454 residues: UPF0210 protein Cphy_2797 (454 aa).

This sequence belongs to the UPF0210 family. As to quaternary structure, homodimer.

The polypeptide is UPF0210 protein Cphy_2797 (Lachnoclostridium phytofermentans (strain ATCC 700394 / DSM 18823 / ISDg) (Clostridium phytofermentans)).